The primary structure comprises 100 residues: MITKEEAQKIAKLARLKFEEDTVEKFSTQLSSIMNMIDILNEIDCKDIEPLTSVSNMNARMREDEVTSSDLSDKLLDHVSGQSAQLAKEVKYFITPKVIE.

This sequence belongs to the GatC family. Heterotrimer of A, B and C subunits.

The catalysed reaction is L-glutamyl-tRNA(Gln) + L-glutamine + ATP + H2O = L-glutaminyl-tRNA(Gln) + L-glutamate + ADP + phosphate + H(+). The enzyme catalyses L-aspartyl-tRNA(Asn) + L-glutamine + ATP + H2O = L-asparaginyl-tRNA(Asn) + L-glutamate + ADP + phosphate + 2 H(+). Its function is as follows. Allows the formation of correctly charged Asn-tRNA(Asn) or Gln-tRNA(Gln) through the transamidation of misacylated Asp-tRNA(Asn) or Glu-tRNA(Gln) in organisms which lack either or both of asparaginyl-tRNA or glutaminyl-tRNA synthetases. The reaction takes place in the presence of glutamine and ATP through an activated phospho-Asp-tRNA(Asn) or phospho-Glu-tRNA(Gln). The sequence is that of Aspartyl/glutamyl-tRNA(Asn/Gln) amidotransferase subunit C from Rickettsia canadensis (strain McKiel).